Reading from the N-terminus, the 290-residue chain is MRLSVKAPAKINLSLDVLYKRPDGYHEVKMVMTTIDLADRIELIPLPGEDAIRVVSQNRFVPDDSRNLAYQAAQLLKETFSIREGVAISITKHIPVAAGLAGGSSDAAATLRGLNKLWKLGLSVHELAELGAQIGSDVAFCVYGGTAVATGRGEIITPISSPPPCWVVLAKPPIGVSTAEVYRNLQLEHVNHPDVDAMVGAIEQQDYAAICRSVGNVLEEVTLKKYPEVAHIKEQMRRFGADAVLMSGSGPTVFGLIEHDSRMQRVYNGLRGFCDQVFAVRLLGERHSLD.

Residue Lys-10 is part of the active site. Pro-95 to Ser-105 provides a ligand contact to ATP. The active site involves Asp-137.

This sequence belongs to the GHMP kinase family. IspE subfamily.

The enzyme catalyses 4-CDP-2-C-methyl-D-erythritol + ATP = 4-CDP-2-C-methyl-D-erythritol 2-phosphate + ADP + H(+). The protein operates within isoprenoid biosynthesis; isopentenyl diphosphate biosynthesis via DXP pathway; isopentenyl diphosphate from 1-deoxy-D-xylulose 5-phosphate: step 3/6. In terms of biological role, catalyzes the phosphorylation of the position 2 hydroxy group of 4-diphosphocytidyl-2C-methyl-D-erythritol. The chain is 4-diphosphocytidyl-2-C-methyl-D-erythritol kinase from Geobacillus thermodenitrificans (strain NG80-2).